A 237-amino-acid polypeptide reads, in one-letter code: Protein CUSTOS (237 aa).

3 disordered regions span residues 1-23, 50-69, and 97-237; these read MAAPRRGTQKSDSDSSDEDLDRF, LRVRPDCHEHDGNELQTTPE, and ISKA…LGNE. The span at 52-62 shows a compositional bias: basic and acidic residues; the sequence is VRPDCHEHDGN. Residues 162 to 177 are compositionally biased toward polar residues; it reads STLQQEPQSTPSNVCD. The segment covering 181 to 190 has biased composition (basic residues); the sequence is PKKKRKKKKK. Positions 182–190 match the Nucleolar localization signal (NLS1) motif; that stretch reads KKKRKKKKK. Basic and acidic residues-rich tracts occupy residues 203-216 and 225-237; these read ETMHIEPGKNELQA and KLEMAHCDELGNE. The Nucleolar localization signal (NLS2) signature appears at 217–225; the sequence is KRKKKKKQK.

The protein belongs to the CUSTOS family. In terms of assembly, interacts (via NLS1 and NLS2) with dvl2; the interaction is negatively regulated by Wnt stimulation. Interacts with csnk1a1. Interacts with ctnnb1; the interaction is positively regulated by Wnt stimulation. Post-translationally, phosphorylated by ck1/csnk1a1.

The protein localises to the nucleus envelope. Essential for Spemann-Mangold organizer formation and subsequent anterior head development in the embryo. Inhibits canonical Wnt signaling pathway by antagonizing nuclear import of beta-catenin (ctnnb1) during embryogenesis. This is Protein CUSTOS from Xenopus laevis (African clawed frog).